The chain runs to 261 residues: Acyl-[acyl-carrier-protein]--UDP-N-acetylglucosamine O-acyltransferase (261 aa).

The protein belongs to the transferase hexapeptide repeat family. LpxA subfamily. Homotrimer.

The protein resides in the cytoplasm. It carries out the reaction a (3R)-hydroxyacyl-[ACP] + UDP-N-acetyl-alpha-D-glucosamine = a UDP-3-O-[(3R)-3-hydroxyacyl]-N-acetyl-alpha-D-glucosamine + holo-[ACP]. It participates in glycolipid biosynthesis; lipid IV(A) biosynthesis; lipid IV(A) from (3R)-3-hydroxytetradecanoyl-[acyl-carrier-protein] and UDP-N-acetyl-alpha-D-glucosamine: step 1/6. In terms of biological role, involved in the biosynthesis of lipid A, a phosphorylated glycolipid that anchors the lipopolysaccharide to the outer membrane of the cell. This chain is Acyl-[acyl-carrier-protein]--UDP-N-acetylglucosamine O-acyltransferase, found in Sulfurimonas denitrificans (strain ATCC 33889 / DSM 1251) (Thiomicrospira denitrificans (strain ATCC 33889 / DSM 1251)).